The following is a 430-amino-acid chain: MVTTLRQTDPDFEQKFAAFLSGKREVSEDVDRAVREIVDRVRREGDSALLDYSRRFDRIDLEKTGIAVTEAEIDAAFDAAPASTVEALKLARDRIEKHHARQLPKDDRYTDALGVELGSRWTAIEAVGLYVPGGTASYPSSVLMNAMPAKVAGVDRIVMVVPAPDGNLNPLVLVAARLAGVSEIYRVGGAQAIAALAYGTETIRPVAKIVGPGNAYVAAAKRIVFGTVGIDMIAGPSEVLIVADKDNNPDWIAADLLAQAEHDTAAQSILMTNDEAFAHAVEEAVERQLHTLARTETASASWRDFGAVILVKDFEDAIPLANRIAAEHLEIAVADAEAFVPRIRNAGSIFIGGYTPEVIGDYVGGCNHVLPTARSARFSSGLSVLDYMKRTSLLKLGSEQLRALGPAAIEIARAEGLDAHAQSVAIRLNL.

Positions 130, 191, and 214 each coordinate NAD(+). Residues Ser-237, Gln-259, and His-262 each contribute to the substrate site. Residues Gln-259 and His-262 each coordinate Zn(2+). Catalysis depends on proton acceptor residues Glu-327 and His-328. Positions 328, 361, 415, and 420 each coordinate substrate. Residue Asp-361 coordinates Zn(2+). Position 420 (His-420) interacts with Zn(2+).

This sequence belongs to the histidinol dehydrogenase family. Requires Zn(2+) as cofactor.

It catalyses the reaction L-histidinol + 2 NAD(+) + H2O = L-histidine + 2 NADH + 3 H(+). The protein operates within amino-acid biosynthesis; L-histidine biosynthesis; L-histidine from 5-phospho-alpha-D-ribose 1-diphosphate: step 9/9. In terms of biological role, catalyzes the sequential NAD-dependent oxidations of L-histidinol to L-histidinaldehyde and then to L-histidine. The protein is Histidinol dehydrogenase of Brucella suis biovar 1 (strain 1330).